The sequence spans 335 residues: Flagellar P-ring protein (335 aa).

Residues 1 to 17 (MNKPMLMLITFATSLLA) form the signal peptide.

It belongs to the FlgI family. As to quaternary structure, the basal body constitutes a major portion of the flagellar organelle and consists of four rings (L,P,S, and M) mounted on a central rod.

It localises to the periplasm. The protein localises to the bacterial flagellum basal body. Assembles around the rod to form the L-ring and probably protects the motor/basal body from shearing forces during rotation. The sequence is that of Flagellar P-ring protein from Borreliella burgdorferi (strain ZS7) (Borrelia burgdorferi).